The primary structure comprises 118 residues: Large ribosomal subunit protein bL21c (118 aa).

Belongs to the bacterial ribosomal protein bL21 family. In terms of assembly, part of the 50S ribosomal subunit.

It localises to the plastid. The protein localises to the chloroplast. In terms of biological role, this protein binds to 23S rRNA. This chain is Large ribosomal subunit protein bL21c, found in Anthoceros angustus (Hornwort).